The sequence spans 80 residues: MPKKNEAPASFEKALSELEQIVTHLESGDLPLEEALNEFERGVQLARQGQAKLQQAEQRVQILLSDNEDASLTPFTPDNE.

The protein belongs to the XseB family. Heterooligomer composed of large and small subunits.

The protein resides in the cytoplasm. It catalyses the reaction Exonucleolytic cleavage in either 5'- to 3'- or 3'- to 5'-direction to yield nucleoside 5'-phosphates.. Bidirectionally degrades single-stranded DNA into large acid-insoluble oligonucleotides, which are then degraded further into small acid-soluble oligonucleotides. The polypeptide is Exodeoxyribonuclease 7 small subunit (Escherichia coli O6:K15:H31 (strain 536 / UPEC)).